The chain runs to 1035 residues: Potassium-transporting ATPase alpha chain 1 (1035 aa).

The disordered stretch occupies residues 1–41 (MGKAENYELYSVELGPGPGGDMAAKMSKKKKAGGGGGKRKE). The Cytoplasmic segment spans residues 1 to 98 (MGKAENYELY…NALRPPRGTP (98 aa)). 2 positions are modified to phosphotyrosine: tyrosine 7 and tyrosine 10. Residues 26–40 (MSKKKKAGGGGGKRK) are compositionally biased toward basic residues. The residue at position 27 (serine 27) is a Phosphoserine. The helical transmembrane segment at 99–119 (EYVKFARQLAGGLQCLMWVAA) threads the bilayer. Residues 120 to 142 (AICLIAFAIQASEGDLTTDDNLY) lie on the Lumenal side of the membrane. The helical transmembrane segment at 143 to 163 (LAIALIAVVVVTGCFGYYQEF) threads the bilayer. At 164–299 (KSTNIIASFK…NEKTPIAIEI (136 aa)) the chain is on the cytoplasmic side. A helical membrane pass occupies residues 300 to 319 (EHFVDIIAGLAILFGATFFI). Residues 320-331 (VAMCIGYTFLRA) lie on the Lumenal side of the membrane. Residues 332-349 (MVFFMAIVVAYVPEGLLA) form a helical membrane-spanning segment. 4 residues coordinate K(+): valine 340, alanine 341, valine 343, and glutamate 345. At 350–783 (TVTVCLSLTA…EQGRLIFDNL (434 aa)) the chain is on the cytoplasmic side. Residue aspartate 387 is the 4-aspartylphosphate intermediate of the active site. Residues aspartate 387 and threonine 389 each contribute to the Mg(2+) site. A phosphoserine mark is found at serine 463 and serine 601. Positions 728 and 732 each coordinate Mg(2+). The chain crosses the membrane as a helical span at residues 784–803 (KKSIAYTLTKNIPELTPYLI). K(+) is bound at residue glutamate 797. Topologically, residues 804–813 (YITVSVPLPL) are lumenal. A helical membrane pass occupies residues 814–834 (GCITILFIELCTDIFPSVSLA). Position 822 (glutamate 822) interacts with K(+). The Cytoplasmic portion of the chain corresponds to 835 to 854 (YEKAESDIMHLRPRNPKRDR). Residue serine 840 is modified to Phosphoserine. Residues 855–877 (LVNEPLAAYSYFQIGAIQSFAGF) form a helical membrane-spanning segment. At 878-929 (TDYFTAMAQEGWFPLLCVGLRAQWEDHHLQDLQDSYGQEWTFGQRLYQQYTC) the chain is on the lumenal side. A helical transmembrane segment spans residues 930–949 (YTVFFISIEVCQIADVLIRK). Over 950 to 963 (TRRLSAFQQGFFRN) the chain is Cytoplasmic. Serine 954 is modified (phosphoserine; by PKA). A helical membrane pass occupies residues 964-982 (KILVIAIVFQVCIGCFLCY). At 983–997 (CPGMPNIFNFMPIRF) the chain is on the lumenal side. Residues 998-1018 (QWWLVPLPYGILIFVYDEIRK) traverse the membrane as a helical segment. Residues 1019–1035 (LGVRCCPGSWWDQELYY) are Cytoplasmic-facing.

This sequence belongs to the cation transport ATPase (P-type) (TC 3.A.3) family. Type IIC subfamily. The gastric H(+)/K(+) ATPase pump is composed of the catalytic alpha subunit ATP4A and the regulatory beta subunit ATP4B. Interacts (via the P-domain) with ATP4B (via N-terminus); this interaction stabilizes the lumenal-open E2 conformation state and prevents the reverse reaction of the transport cycle. In terms of tissue distribution, expressed in gastric parietal cells (at protein level).

It is found in the apical cell membrane. It carries out the reaction K(+)(out) + ATP + H2O + H(+)(in) = K(+)(in) + ADP + phosphate + 2 H(+)(out). Functionally, the catalytic subunit of the gastric H(+)/K(+) ATPase pump which transports H(+) ions in exchange for K(+) ions across the apical membrane of parietal cells. Uses ATP as an energy source to pump H(+) ions to the gastric lumen while transporting K(+) ion from the lumen into the cell. Remarkably generates a million-fold proton gradient across the gastric parietal cell membrane, acidifying the gastric juice down to pH 1. Within a transport cycle, the transfer of a H(+) ion across the membrane is coupled to ATP hydrolysis and is associated with a transient phosphorylation that shifts the pump conformation from inward-facing (E1) to outward-facing state (E2). The release of the H(+) ion in the stomach lumen is followed by binding of K(+) ion converting the pump conformation back to the E1 state. This Homo sapiens (Human) protein is Potassium-transporting ATPase alpha chain 1.